Consider the following 327-residue polypeptide: E3 ubiquitin ligase Rnf121 (327 aa).

Helical transmembrane passes span 50-70, 79-96, 99-119, 148-168, and 173-193; these read MHAEMVLILIATLVVAQLLLV, SYNMVTLFQMWIVPVYFT, LHWWRFLGIWIVFSIITAYIT, ATGIVGYIAVMFTLFGLNLLF, and EDAMDFGISLLFYGLYYGVLG. The RING-type; atypical zinc-finger motif lies at 226 to 276; sequence CAVCGQQIFVDVNEEGIIENTYRLSCNHVFHEFCIRGWCIVGKKQTCPYCK.

Belongs to the RNF121 family.

It localises to the endoplasmic reticulum membrane. It carries out the reaction S-ubiquitinyl-[E2 ubiquitin-conjugating enzyme]-L-cysteine + [acceptor protein]-L-lysine = [E2 ubiquitin-conjugating enzyme]-L-cysteine + N(6)-ubiquitinyl-[acceptor protein]-L-lysine.. The protein operates within protein modification; protein ubiquitination. In terms of biological role, E3 ubiquitin ligase which accepts ubiquitin and transfers it to substrates thereby promoting their degradation by the endoplasmic reticulum-associated degradation (ERAD) pathway which is a pathway involved in ubiquitin-dependent degradation of misfolded endoplasmic reticulum proteins. May regulate the unfolded protein response to reduce endoplasmic reticulum stress. The polypeptide is E3 ubiquitin ligase Rnf121 (rnf121) (Xenopus laevis (African clawed frog)).